Reading from the N-terminus, the 235-residue chain is Small ribosomal subunit protein uS3 (235 aa).

In terms of domain architecture, KH type-2 spans 39–107 (VRKFLNKELA…PAQINIAEVK (69 aa)).

This sequence belongs to the universal ribosomal protein uS3 family. As to quaternary structure, part of the 30S ribosomal subunit. Forms a tight complex with proteins S10 and S14.

Functionally, binds the lower part of the 30S subunit head. Binds mRNA in the 70S ribosome, positioning it for translation. This is Small ribosomal subunit protein uS3 from Mannheimia succiniciproducens (strain KCTC 0769BP / MBEL55E).